The sequence spans 491 residues: Glutamate--tRNA ligase (491 aa).

Residues 9–19 carry the 'HIGH' region motif; the sequence is PSPTGTPHVGM. The 'KMSKS' region motif lies at 253–257; it reads KLSKR. ATP is bound at residue Lys256.

Belongs to the class-I aminoacyl-tRNA synthetase family. Glutamate--tRNA ligase type 1 subfamily. Monomer.

It is found in the cytoplasm. The enzyme catalyses tRNA(Glu) + L-glutamate + ATP = L-glutamyl-tRNA(Glu) + AMP + diphosphate. Catalyzes the attachment of glutamate to tRNA(Glu) in a two-step reaction: glutamate is first activated by ATP to form Glu-AMP and then transferred to the acceptor end of tRNA(Glu). The protein is Glutamate--tRNA ligase of Leifsonia xyli subsp. xyli (strain CTCB07).